The chain runs to 83 residues: Alpha-elapitoxin-Ppr1 (83 aa).

Positions 1-21 (MKTLLLTLVVVTIVCLDLGYT) are cleaved as a signal peptide. 4 disulfide bridges follow: cysteine 24–cysteine 45, cysteine 38–cysteine 62, cysteine 64–cysteine 75, and cysteine 76–cysteine 81.

Belongs to the three-finger toxin family. Short-chain subfamily. Type I alpha-neurotoxin sub-subfamily. As to expression, expressed by the venom gland.

The protein localises to the secreted. Bird-specific neurotoxin (tested on chicken) that acts as a pseudo-irreversible antagonist at the nicotinic acetylcholine receptor (nAChR) of the skeletal neuromuscular junction. Has no significant effect on the electrically-induced twitches of the rat isolated phrenic nerve-diaphragm preparation. This chain is Alpha-elapitoxin-Ppr1, found in Pseudechis porphyriacus (Red-bellied black snake).